The following is an 868-amino-acid chain: Monofunctional pimaradiene synthase (868 aa).

Residues Asp620, Asp624, Asn764, Thr768, and Glu772 each contribute to the Mg(2+) site.

The protein belongs to the terpene synthase family. Tpsd subfamily. The cofactor is Mg(2+).

The enzyme catalyses (+)-copalyl diphosphate = (-)-pimara-8(14),15-diene + diphosphate. Its pathway is terpene metabolism; oleoresin biosynthesis. In terms of biological role, involved in defensive oleoresin formation in conifers in response to insect attack or other injury. Involved in diterpene (C20) olefins biosynthesis. Monofunctional enzyme lacking the DXDD motif in the class II active site relevant for the cyclization of geranylgeranyl diphosphate (GGPP). Requires (+)-copalyl diphosphate ((+)-CPP) as substrate, but no activity with GGPP or ent-CPP. Pimaradiene is the major products of the enzyme. This is Monofunctional pimaradiene synthase from Pinus contorta (Shore pine).